The following is a 496-amino-acid chain: Probable cytosol aminopeptidase (496 aa).

Positions 261 and 266 each coordinate Mn(2+). The active site involves K273. D284, D343, and E345 together coordinate Mn(2+). Residue R347 is part of the active site.

This sequence belongs to the peptidase M17 family. Mn(2+) is required as a cofactor.

The protein resides in the cytoplasm. The enzyme catalyses Release of an N-terminal amino acid, Xaa-|-Yaa-, in which Xaa is preferably Leu, but may be other amino acids including Pro although not Arg or Lys, and Yaa may be Pro. Amino acid amides and methyl esters are also readily hydrolyzed, but rates on arylamides are exceedingly low.. It catalyses the reaction Release of an N-terminal amino acid, preferentially leucine, but not glutamic or aspartic acids.. Presumably involved in the processing and regular turnover of intracellular proteins. Catalyzes the removal of unsubstituted N-terminal amino acids from various peptides. The sequence is that of Probable cytosol aminopeptidase from Bacillus pumilus (strain SAFR-032).